The primary structure comprises 245 residues: MILFPAIDLKNGQCVRLEQGDMDRATVFNLDPAAQAKSFAAQGFEYLHVVDLDGAFAGKPMNAQAVESMLQVVKMPVQLGGGIRDLATIEAWLGKGVSRVIIGTAAVRDPALVKDAAKKFPGRVAVGLDARDGKVAVQGWAESSEVTALEIAQRFEDAGVAAIIFTDIARDGLLKGLNLDATIELAATISTPVIASGGFGSIDDVKALILPRAAKLAGAIVGRALYDGRLDPTEALALMRRAAAA.

Catalysis depends on D8, which acts as the Proton acceptor. The active-site Proton donor is D129.

Belongs to the HisA/HisF family.

Its subcellular location is the cytoplasm. The enzyme catalyses 1-(5-phospho-beta-D-ribosyl)-5-[(5-phospho-beta-D-ribosylamino)methylideneamino]imidazole-4-carboxamide = 5-[(5-phospho-1-deoxy-D-ribulos-1-ylimino)methylamino]-1-(5-phospho-beta-D-ribosyl)imidazole-4-carboxamide. It participates in amino-acid biosynthesis; L-histidine biosynthesis; L-histidine from 5-phospho-alpha-D-ribose 1-diphosphate: step 4/9. The sequence is that of 1-(5-phosphoribosyl)-5-[(5-phosphoribosylamino)methylideneamino] imidazole-4-carboxamide isomerase from Rhodopseudomonas palustris (strain BisB18).